Here is a 189-residue protein sequence, read N- to C-terminus: uncharacterized protein (189 aa).

An N-terminal signal peptide occupies residues 1–20; sequence MKFSTVGFLFSTILFKSAFA. Positions 74-109 constitute an EF-hand domain; the sequence is KKNEVLVDVLKKCDPSGNRRITLDEFLAFRKNGGEL. Asp87, Ser89, Asn91, Arg93, and Glu98 together coordinate Ca(2+).

Its subcellular location is the endoplasmic reticulum lumen. The protein resides in the golgi apparatus lumen. This is an uncharacterized protein from Schizosaccharomyces pombe (strain 972 / ATCC 24843) (Fission yeast).